A 192-amino-acid chain; its full sequence is Phosphoheptose isomerase (192 aa).

The 156-residue stretch at 37-192 (LADSFKAGGK…IQLIEKEMVK (156 aa)) folds into the SIS domain. 52-54 (NGG) is a substrate binding site. 2 residues coordinate Zn(2+): histidine 61 and glutamate 65. Substrate contacts are provided by residues glutamate 65, 93–94 (ND), 119–121 (STS), serine 124, and glutamine 172. Residues glutamine 172 and histidine 180 each coordinate Zn(2+).

It belongs to the SIS family. GmhA subfamily. Homotetramer. Requires Zn(2+) as cofactor.

It localises to the cytoplasm. The catalysed reaction is 2 D-sedoheptulose 7-phosphate = D-glycero-alpha-D-manno-heptose 7-phosphate + D-glycero-beta-D-manno-heptose 7-phosphate. It participates in carbohydrate biosynthesis; D-glycero-D-manno-heptose 7-phosphate biosynthesis; D-glycero-alpha-D-manno-heptose 7-phosphate and D-glycero-beta-D-manno-heptose 7-phosphate from sedoheptulose 7-phosphate: step 1/1. In terms of biological role, catalyzes the isomerization of sedoheptulose 7-phosphate in D-glycero-D-manno-heptose 7-phosphate. In Salmonella dublin (strain CT_02021853), this protein is Phosphoheptose isomerase.